The primary structure comprises 140 residues: Sex-regulated protein janus-B (140 aa).

Arg-42 contributes to the substrate binding site. His-69 acts as the Proton acceptor in catalysis. A substrate-binding site is contributed by 110–112 (SRT).

It belongs to the janus family.

Its function is as follows. JanA and janB regulate somatic sex differentiation. The chain is Sex-regulated protein janus-B (janB) from Drosophila orena (Fruit fly).